A 493-amino-acid polypeptide reads, in one-letter code: tRNA (uracil-5-)-methyltransferase homolog B (493 aa).

Residues 1-14 constitute a mitochondrion transit peptide; the sequence is MHNPRLFLSRAGFF. Residues Q312, E362, and N412 each contribute to the S-adenosyl-L-methionine site. C440 functions as the Nucleophile in the catalytic mechanism. The active-site Proton acceptor is the E486.

The protein belongs to the class I-like SAM-binding methyltransferase superfamily. RNA M5U methyltransferase family.

Its subcellular location is the mitochondrion matrix. It carries out the reaction uridine(54) in tRNA + S-adenosyl-L-methionine = 5-methyluridine(54) in tRNA + S-adenosyl-L-homocysteine + H(+). The enzyme catalyses a uridine in 12S rRNA + S-adenosyl-L-methionine = a 5-methyluridine in 12S rRNA + S-adenosyl-L-homocysteine + H(+). Its function is as follows. Mitochondrial S-adenosyl-L-methionine-dependent methyltransferase that catalyzes the formation of 5-methyl-uridine in tRNAs and 12S rRNA. Catalyzes the methylation of uridine at position 54 (m5U54) in all tRNAs. Specifically methylates the uridine in position 425 of 12S rRNA (m5U425). Does not affect RNA stability or mitochondrial translation. This is tRNA (uracil-5-)-methyltransferase homolog B from Mus musculus (Mouse).